The primary structure comprises 219 residues: Transmembrane protein 125 (219 aa).

The next 4 helical transmembrane spans lie at 36–56, 68–88, 114–134, and 147–167; these read LCFVVAVGLVAGCGAGGVALL, LATGTVLCLLALLVLVKQLMS, ALVVLLSGLVLLVTGLTLAGL, and MLSVGIALAALGSLLLLGLLL.

The protein resides in the membrane. The polypeptide is Transmembrane protein 125 (TMEM125) (Homo sapiens (Human)).